The following is a 364-amino-acid chain: GDP-fucose transporter 1 (364 aa).

8 consecutive transmembrane segments (helical) span residues 34-56 (FLLR…ISMV), 76-98 (VTFY…AACC), 111-130 (LRVA…MITF), 140-162 (VAFY…YLLL), 167-185 (SFYA…WLGV), 195-214 (SWLG…LNAI), 227-249 (IWRL…LLLL), and 264-286 (AHFW…VTGL).

This sequence belongs to the TPT transporter family. SLC35C subfamily.

It is found in the golgi apparatus membrane. The catalysed reaction is GMP(out) + GDP-beta-L-fucose(in) = GMP(in) + GDP-beta-L-fucose(out). Antiporter specific for GDP-l-fucose and depending on the concomitant reverse transport of GMP. Involved in GDP-fucose import from the cytoplasm into the Golgi lumen. This Homo sapiens (Human) protein is GDP-fucose transporter 1.